The primary structure comprises 495 residues: MKWLRLQDLPTDNSFAALPAEFYTRLQPRPPAAPRLLHANAEAAALIGLDPAEFSTQAFLDVFSGHAPLPGGDTLAAVYSGHQFGVWAGQLGDGRAHLLGEVRGPAGGWELQLKGAGMTPYSRMGDGRAVLRSSVREYLASEAMHGLGIPTTRSLALVVSDDPVMRETVETAAVVTRMAPSFVRFGSFEHWSARRQPEQLRVLADYVIDRFYPECRVAGAGRLDGEHGEILGLLAAVTRRTALLMADWQAVGFCHGVMNTDNMSILGLTLDYGPYGFMDTFQLGHICNHSDSEGRYAWNRQPSVGLWNLYRLASSLHTLAPDPEALRAVLDGYEAVFTQAFHGRMAGKLGLPQFLPEDETLLDDLLQLMHQQGADFTLAFRRLGEAVRGQRQPFEDLFIDRAAAGAWYDRLAARHASDGRAAQARAAAMDEVNPLYVLRNHLAEQAIRAAARGDAGEIDILLKLLRNPYKQQPGYDAYAGLAPDWAAGLEVSCSS.

ATP is bound by residues Gly-92, Gly-94, Arg-95, Lys-114, Asp-126, Gly-127, Arg-177, and Arg-184. The active-site Proton acceptor is Asp-261. Mg(2+)-binding residues include Asn-262 and Asp-271. Asp-271 contacts ATP.

It belongs to the SELO family. Mg(2+) serves as cofactor. The cofactor is Mn(2+).

The catalysed reaction is L-seryl-[protein] + ATP = 3-O-(5'-adenylyl)-L-seryl-[protein] + diphosphate. The enzyme catalyses L-threonyl-[protein] + ATP = 3-O-(5'-adenylyl)-L-threonyl-[protein] + diphosphate. It catalyses the reaction L-tyrosyl-[protein] + ATP = O-(5'-adenylyl)-L-tyrosyl-[protein] + diphosphate. It carries out the reaction L-histidyl-[protein] + UTP = N(tele)-(5'-uridylyl)-L-histidyl-[protein] + diphosphate. The catalysed reaction is L-seryl-[protein] + UTP = O-(5'-uridylyl)-L-seryl-[protein] + diphosphate. The enzyme catalyses L-tyrosyl-[protein] + UTP = O-(5'-uridylyl)-L-tyrosyl-[protein] + diphosphate. In terms of biological role, nucleotidyltransferase involved in the post-translational modification of proteins. It can catalyze the addition of adenosine monophosphate (AMP) or uridine monophosphate (UMP) to a protein, resulting in modifications known as AMPylation and UMPylation. The protein is Protein nucleotidyltransferase YdiU of Bordetella bronchiseptica (strain ATCC BAA-588 / NCTC 13252 / RB50) (Alcaligenes bronchisepticus).